Reading from the N-terminus, the 433-residue chain is MAFRDVLDIEVAAGNGGDGSMSFHRAKYLEKGGPDGGHGGRGGSVILRAIEGVESLERLVGQRKFKAPNGAYGEGRLRQGADGEDLYIDVPVGTTAFDRDSGKVIADLVRVGQEKVIARGGLGGRGNSTFVTSTRQAPRFAELGTPGEKRRVRLELRLIADVGLVGYPNAGKSSLLAALSRANPAIADYPFTTLSPILGVVESADGEKRFTMADIPGIIEGASEGKGLGLEFLRHISRTRLLVYVLDVTRDPAEELRQLQTELRTYDPSLLENVALIALNKIELVDADLAAMVEDELAEFGLPVLPVSAKTGQGLPELRQALFDLLPDRELWARTHALEEEPEEVREEPLTLTFREDAPEKPGEAPERVWEVHGGGFEARIVRFARHLEDAAEYLSNLFKRQGLYNALKRAGAREGDTVEIGSFRFEYYADED.

Residues 1–159 enclose the Obg domain; that stretch reads MAFRDVLDIE…RRVRLELRLI (159 aa). One can recognise an OBG-type G domain in the interval 160–327; sequence ADVGLVGYPN…LRQALFDLLP (168 aa). Residues 166-173, 191-195, 214-217, 280-283, and 308-310 contribute to the ATP site; these read GYPNAGKS, FTTLS, DIPG, NKIE, and SAK. The Mg(2+) site is built by serine 173 and threonine 193. One can recognise an OCT domain in the interval 342–430; it reads PEEVREEPLT…IGSFRFEYYA (89 aa).

Belongs to the TRAFAC class OBG-HflX-like GTPase superfamily. OBG GTPase family. Monomer. The cofactor is Mg(2+).

The protein localises to the cytoplasm. Functionally, an essential GTPase which binds GTP, GDP and possibly (p)ppGpp with moderate affinity, with high nucleotide exchange rates and a fairly low GTP hydrolysis rate. Plays a role in control of the cell cycle, stress response, ribosome biogenesis and in those bacteria that undergo differentiation, in morphogenesis control. This is GTPase Obg from Deinococcus geothermalis (strain DSM 11300 / CIP 105573 / AG-3a).